Reading from the N-terminus, the 330-residue chain is N-acetyl-gamma-glutamyl-phosphate reductase (330 aa).

The active site involves C143.

It belongs to the NAGSA dehydrogenase family. Type 1 subfamily.

The protein resides in the cytoplasm. It carries out the reaction N-acetyl-L-glutamate 5-semialdehyde + phosphate + NADP(+) = N-acetyl-L-glutamyl 5-phosphate + NADPH + H(+). It participates in amino-acid biosynthesis; L-arginine biosynthesis; N(2)-acetyl-L-ornithine from L-glutamate: step 3/4. Catalyzes the NADPH-dependent reduction of N-acetyl-5-glutamyl phosphate to yield N-acetyl-L-glutamate 5-semialdehyde. The chain is N-acetyl-gamma-glutamyl-phosphate reductase from Methanocorpusculum labreanum (strain ATCC 43576 / DSM 4855 / Z).